The primary structure comprises 320 residues: Adhesin MafA 1 (320 aa).

An N-terminal signal peptide occupies residues 1-18; that stretch reads MQARLLIPILFSVFILSA. C19 is lipidated: N-palmitoyl cysteine. C19 carries the S-diacylglycerol cysteine lipid modification. The segment at 288–320 is disordered; sequence HMGNSAPSVEADNSHEGYGYSDEAVRRHRQGQP.

It belongs to the MafA family.

It localises to the cell outer membrane. In Neisseria meningitidis serogroup A / serotype 4A (strain DSM 15465 / Z2491), this protein is Adhesin MafA 1 (mafA1).